Consider the following 289-residue polypeptide: dTDP-rhamnosyl transferase RfbG (289 aa).

It belongs to the glycosyltransferase 2 family.

It functions in the pathway bacterial outer membrane biogenesis; lipopolysaccharide biosynthesis. The protein is dTDP-rhamnosyl transferase RfbG (rfbG) of Shigella flexneri.